The primary structure comprises 155 residues: Endoribonuclease YbeY (155 aa).

His114, His118, and His124 together coordinate Zn(2+).

This sequence belongs to the endoribonuclease YbeY family. Zn(2+) serves as cofactor.

Its subcellular location is the cytoplasm. Single strand-specific metallo-endoribonuclease involved in late-stage 70S ribosome quality control and in maturation of the 3' terminus of the 16S rRNA. This is Endoribonuclease YbeY from Baumannia cicadellinicola subsp. Homalodisca coagulata.